Reading from the N-terminus, the 57-residue chain is Metallothionein-2 (57 aa).

The interval 1–28 (PDPCCNDKCDCKEGECKTGCKCTSCRCP) is beta. A divalent metal cation is bound by residues Cys-4, Cys-5, Cys-9, Cys-11, Cys-16, Cys-20, Cys-22, Cys-25, Cys-27, Cys-30, Cys-33, Cys-37, Cys-39, Cys-45, Cys-49, Cys-53, Cys-55, and Cys-56. The segment at 29–57 (PCEQCSSGCKCANKEDCRKTCSKPCSCCP) is alpha.

It belongs to the metallothionein superfamily. Type 3 family.

Functionally, metallothioneins have a high content of cysteine residues that bind various heavy metals. Class I MTS in marine crustacea are involved in the sequestration of elevated levels of heavy-metal ions. This Scylla serrata (Mud crab) protein is Metallothionein-2.